A 258-amino-acid polypeptide reads, in one-letter code: Venom plasminogen activator Haly-PA (258 aa).

Residues 1 to 18 (MALIRVLANLLILQLSYA) form the signal peptide. Residues 19-24 (QKSSEL) constitute a propeptide that is removed on maturation. The region spanning 25-249 (VVGGDECNIN…HLDWIKSIIA (225 aa)) is the Peptidase S1 domain. 6 disulfide bridges follow: C31–C163, C50–C66, C98–C256, C142–C210, C174–C189, and C200–C225. The N-linked (GlcNAc...) asparagine glycan is linked to N44. Residues H65 and D110 each act as charge relay system in the active site. S204 functions as the Charge relay system in the catalytic mechanism.

This sequence belongs to the peptidase S1 family. Snake venom subfamily. Monomer. Glycosylated. In terms of tissue distribution, expressed by the venom gland.

The protein resides in the secreted. Functionally, snake venom serine protease that activates plasminogen. Displays indirect fibrino(geno)lytic activity through conversion of plasminogen to plasmin. Shows a preferential cleavage at Arg-|-Xaa instead of Lys-|-Xaa bonds. The chain is Venom plasminogen activator Haly-PA from Gloydius brevicauda (Korean slamosa snake).